Consider the following 483-residue polypeptide: S-adenosylhomocysteine hydrolase-like protein 1 (483 aa).

A disordered region spans residues 1–56 (MQEFTKFPTKTGRRSLSRSISQSSTDSYSSAASYTDSSDDEVSPREKQQTNSKGSS). Residues 17–36 (SRSISQSSTDSYSSAASYTD) show a composition bias toward low complexity. Residues 18–45 (RSISQSSTDSYSSAASYTDSSDDEVSPR) form a PEST region. A Phosphoserine; by PKD modification is found at Ser-21. Phosphoserine occurs at positions 24, 27, 30, and 37. The segment at 91-154 (QGEKPLAGAK…EAGVAVFAWK (64 aa)) is interaction with BCL2L10. The substrate site is built by Thr-108, Asp-182, Glu-207, Lys-237, and Asp-241. The tract at residues 234–401 (SVTKQKFDNL…EGRLLNLSCS (168 aa)) is NAD binding. NAD(+)-binding positions include 271 to 275 (GYGEV), Glu-294, and Asn-329. Residue Ser-344 is modified to Phosphoserine. 350–352 (MGH) serves as a coordination point for NAD(+). The PDZ-binding stretch occupies residues 473 to 483 (NGPFKPNYYRY).

It belongs to the adenosylhomocysteinase family. Forms multimers. Forms heteromultimers with AHCYL2 (via the C-terminal region). Interacts (when phosphorylated) with ITPR1 (when not phosphorylated); the interaction suppresses inositol 1,4,5-trisphosphate binding to ITPR1. Interacts with BCL2L10; this strengthens the interaction of AHCYL1 with ITPR1. Interacts with CFTR and SLC26A6; the interactions take place once AHCYL1 is released from ITPR1 and increase CFTR and SLC26A6 activities. Interacts with RRM1; in a phosphorylation- and (dATP)-dependent manner. Interacts (via PEST domain when phosphorylated) with SLC4A4 isoform 1 but not isoform 2; the interaction increases SLC4A4 isoform 1 activity. Interacts (when phosphorylated) with SLC9A3; the interaction is required for SLC9A3 apical location and activity. Interacts (when phosphorylated) with FIP1L1; the interaction is direct and associates AHCYL1 with the CPSF complex and RNA. Interacts with PAPOLA. Interacts with ZCCHC4. Interacts with AHCY. It depends on NAD(+) as a cofactor. In terms of processing, phosphorylated at Ser/Thr residues between Ser-21 and Thr-25 in the PEST region: required for interaction with dATP-bound RRM1 and ITPR1. Phosphorylation at Ser-21 by PRKD1 and CAMK4 is required for further phosphorylations by CSNK1A1. Phosphorylation is induced by oxidative stress. Probably phosphorylated by CAMK2A; phosphorylation at Ser-21 may be required for interaction with SLC9A3. Dephosphorylated in response to apoptotic stress conditions which causes translocation of both AHCYL1 and BCL2L10 from mitochondria-associated endoplasmic reticulum membranes and promotes apoptosis. As to expression, expressed in kidney proximal tubules and outer medulla (at protein level).

The protein resides in the endoplasmic reticulum. It localises to the cytoplasm. The protein localises to the cytosol. Its subcellular location is the apical cell membrane. It is found in the microsome. Multifaceted cellular regulator which coordinates several essential cellular functions including regulation of epithelial HCO3(-) and fluid secretion, mRNA processing and DNA replication. Regulates ITPR1 sensitivity to inositol 1,4,5-trisphosphate, competing for the common binding site and acting as endogenous 'pseudoligand' whose inhibitory activity can be modulated by its phosphorylation status. Promotes the formation of contact points between the endoplasmic reticulum (ER) and mitochondria, facilitating transfer of Ca(2+) from the ER to mitochondria. Under normal cellular conditions, functions cooperatively with BCL2L10 to limit ITPR1-mediated Ca(2+) release but, under apoptotic stress conditions, dephosphorylated which promotes dissociation of both AHCYL1 and BCL2L10 from mitochondria-associated endoplasmic reticulum membranes, inhibits BCL2L10 interaction with ITPR1 and leads to increased Ca(2+) transfer to mitochondria which promotes apoptosis. In the pancreatic and salivary ducts, at resting state, attenuates inositol 1,4,5-trisphosphate-induced calcium release by interacting with ITPR1. When extracellular stimuli induce ITPR1 phosphorylation or inositol 1,4,5-trisphosphate production, dissociates from ITPR1 to interact with CFTR and SLC26A6, mediating their synergistic activation by calcium and cAMP that stimulates the epithelial secretion of electrolytes and fluid. Also activates basolateral SLC4A4 isoform 1 to coordinate fluid and HCO3(-) secretion. Inhibits the effect of STK39 on SLC4A4 and CFTR by recruiting PP1 phosphatase which activates SLC4A4, SLC26A6 and CFTR through dephosphorylation. Mediates the induction of SLC9A3 surface expression produced by Angiotensin-2. Depending on the cell type, activates SLC9A3 in response to calcium or reverses SLC9A3R2-dependent calcium inhibition. May modulate the polyadenylation state of specific mRNAs, both by controlling the subcellular location of FIP1L1 and by inhibiting PAPOLA activity, in response to a stimulus that alters its phosphorylation state. Acts as a (dATP)-dependent inhibitor of ribonucleotide reductase large subunit RRM1, controlling the endogenous dNTP pool and ensuring normal cell cycle progression. In vitro does not exhibit any S-adenosyl-L-homocysteine hydrolase activity. This Rattus norvegicus (Rat) protein is S-adenosylhomocysteine hydrolase-like protein 1.